Consider the following 245-residue polypeptide: Small ribosomal subunit protein uS2 (245 aa).

It belongs to the universal ribosomal protein uS2 family.

The polypeptide is Small ribosomal subunit protein uS2 (Dehalococcoides mccartyi (strain ATCC BAA-2266 / KCTC 15142 / 195) (Dehalococcoides ethenogenes (strain 195))).